The primary structure comprises 405 residues: Cytochrome P450 130 (405 aa).

Positions 93 and 97 each coordinate substrate. Positions 101, 243, 295, 318, 348, 352, and 354 each coordinate heme.

Belongs to the cytochrome P450 family. In terms of assembly, homodimer. It depends on heme as a cofactor.

The sequence is that of Cytochrome P450 130 (cyp130) from Mycobacterium tuberculosis (strain CDC 1551 / Oshkosh).